Here is a 704-residue protein sequence, read N- to C-terminus: SH3KBP1-binding protein 1 (704 aa).

A2 bears the N-acetylalanine mark. The region spanning 19 to 88 (EVIHLNVGGK…LRTKELDPRG (70 aa)) is the BTB domain. Positions 146 to 165 (VGPQQIGGRPAPVRRSNTMP) are disordered. Residue T163 is modified to Phosphothreonine. WD repeat units lie at residues 233 to 280 (RLDW…GGSE), 283 to 322 (VFHL…WQVQ), 324 to 359 (VQPI…LRMK), 428 to 466 (VHRS…GMIS), and 548 to 586 (LECE…DGLG). The disordered stretch occupies residues 609–704 (PLTSSRASFP…PKNTLNETSF (96 aa)). Over residues 611-631 (TSSRASFPSPSPRTSLTSLHS) the composition is skewed to low complexity. The short motif at 618-623 (PSPSPR) is the PXXXPR element. Residues S644 and S646 each carry the phosphoserine modification. The short motif at 678–683 (PTPAPR) is the PXXXPR element.

It belongs to the KCTD3 family. As to quaternary structure, monomer. Interacts with CUL3; interaction is direct and forms a 5:5 heterodecamer. Interacts (via PXXXPR motifs) with SH3KBP1 (via SH3 domains). Directly interacts with cathepsin B/CTSB.

It is found in the lysosome. Functionally, inhibits CBL-SH3KBP1 complex mediated down-regulation of EGFR signaling by sequestration of SH3KBP1. Binds to SH3KBP1 and prevents its interaction with CBL and inhibits translocation of SH3KBP1 to EGFR containing vesicles upon EGF stimulation. In Rattus norvegicus (Rat), this protein is SH3KBP1-binding protein 1 (Shkbp1).